Consider the following 373-residue polypeptide: GTPase Obg (373 aa).

The Obg domain occupies 1 to 158 (MFVDSVELLI…KQVRLEMKLI (158 aa)). The interval 62-83 (NHIKAENGRPGEGRKKYGRKGQ) is disordered. The segment covering 64-76 (IKAENGRPGEGRK) has biased composition (basic and acidic residues). In terms of domain architecture, OBG-type G spans 159–362 (ADVGLVGYPN…LRYALGDFVK (204 aa)). GTP contacts are provided by residues 165–172 (GYPNVGKS), 190–194 (FTTLT), 212–215 (DIPG), 280–283 (TKID), and 343–345 (SSV). Residues serine 172 and threonine 192 each coordinate Mg(2+).

This sequence belongs to the TRAFAC class OBG-HflX-like GTPase superfamily. OBG GTPase family. Monomer. Mg(2+) serves as cofactor.

The protein localises to the cytoplasm. In terms of biological role, an essential GTPase which binds GTP, GDP and possibly (p)ppGpp with moderate affinity, with high nucleotide exchange rates and a fairly low GTP hydrolysis rate. Plays a role in control of the cell cycle, stress response, ribosome biogenesis and in those bacteria that undergo differentiation, in morphogenesis control. In Sulfurovum sp. (strain NBC37-1), this protein is GTPase Obg.